The primary structure comprises 614 residues: DNA double-strand break repair protein Mre11 (614 aa).

Mn(2+) contacts are provided by aspartate 12, histidine 14, aspartate 53, and asparagine 88. Histidine 89 (proton donor) is an active-site residue. Residues histidine 158, aspartate 189, and histidine 191 each coordinate Mn(2+). Disordered regions lie at residues 393–434 and 487–614; these read ASPI…SPDI and ALKK…GDYL. Residues 411 to 425 show a composition bias toward low complexity; it reads PVSSADSVSAVSPES. Composition is skewed to basic and acidic residues over residues 487–502, 535–558, and 568–591; these read ALKK…REAP, VPEK…KETG, and GSEK…EKPV.

Belongs to the MRE11/RAD32 family. In terms of assembly, homodimer. Forms a heterotetramer composed of two Mre11 subunits and two Rad50 subunits. Mn(2+) serves as cofactor.

Its activity is regulated as follows. Nuclease activity is regulated by Rad50. Part of the Rad50/Mre11 complex, which is involved in the early steps of DNA double-strand break (DSB) repair. The complex may facilitate opening of the processed DNA ends to aid in the recruitment of HerA and NurA. Mre11 binds to DSB ends and has both double-stranded 3'-5' exonuclease activity and single-stranded endonuclease activity. This chain is DNA double-strand break repair protein Mre11, found in Methanosarcina acetivorans (strain ATCC 35395 / DSM 2834 / JCM 12185 / C2A).